A 504-amino-acid chain; its full sequence is MTQTNGFDALHAHAQRLRGAAIPALLAAEPERPTQYAWQVGPLYFNFARQKYDRAALDALFAIARERDLAGAFQRLFRGEQVNVTEQRAALHTALRGDLTDAPVASEAYATAAEVRQRMGALIQQLEATDVTDIVSVGIGGSDLGPRLVADALRPVSGARLRVHFVSNVDGAAMQRTLATLDPARTAGILISKTFGTQETLLNGSILHAWLGGSERLYAVSANPERAAKAFDIAPGRVLPMWDWVGGRYSLWSAVGFPIALAIGFERFEQLLEGAAQFDAHALNTPLEENVAVLHGLTAVWNRNLLGSATHAVMTYDQRLALLPAYLQQLVMESLGKRVKLDGSAVDSDTVSVWWGGAGTDVQHSFFQALHQGTSVVPADFIGTVHNDDPYAENHVALMANVLAQTEALANGQDSSDPHRSYPGGRPSTVILLDALTPQALGALISMYEHSVYVQSVMWGINAFDQFGVELGKQLASQLLPALKGESADVADPVTRELLSKLRG.

The Proton donor role is filled by Glu-333. Residues His-364 and Lys-473 contribute to the active site.

Belongs to the GPI family.

It localises to the cytoplasm. It carries out the reaction alpha-D-glucose 6-phosphate = beta-D-fructose 6-phosphate. Its pathway is carbohydrate biosynthesis; gluconeogenesis. The protein operates within carbohydrate degradation; glycolysis; D-glyceraldehyde 3-phosphate and glycerone phosphate from D-glucose: step 2/4. Functionally, catalyzes the reversible isomerization of glucose-6-phosphate to fructose-6-phosphate. This Xanthomonas oryzae pv. oryzae (strain KACC10331 / KXO85) protein is Glucose-6-phosphate isomerase.